The following is a 2587-amino-acid chain: Protein KINKY POLLEN (2587 aa).

The N-terminal stretch at Met-1–Pro-27 is a signal peptide. The N-linked (GlcNAc...) asparagine glycan is linked to Asn-71. The interval Pro-103–Gly-124 is disordered. Residues Lys-108 to Lys-117 show a composition bias toward basic residues. N-linked (GlcNAc...) asparagine glycans are attached at residues Asn-262, Asn-281, and Asn-485. Residues Ser-270–Gln-290 are disordered. Polar residues predominate over residues Asp-276–Glu-285. Residues Gly-589–Thr-611 are disordered. Positions Thr-691–Glu-716 form a coiled coil. Positions Gln-784–Lys-814 are disordered. N-linked (GlcNAc...) asparagine glycans are attached at residues Asn-1155, Asn-1250, Asn-1281, and Asn-1486. Disordered stretches follow at residues His-1571–Asp-1608, Val-1646–Asn-1673, and Glu-1729–Glu-1797. Over residues Ala-1576 to Arg-1590 the composition is skewed to polar residues. N-linked (GlcNAc...) asparagine glycosylation is present at Asn-1595. Basic and acidic residues predominate over residues Val-1646–Pro-1666. The segment covering Lys-1746–Lys-1760 has biased composition (polar residues). Residues Asn-1861, Asn-1951, Asn-1981, Asn-2036, and Asn-2278 are each glycosylated (N-linked (GlcNAc...) asparagine). Positions Ile-2006–Asn-2036 form a coiled coil. Residues Gln-2274–Arg-2287 show a composition bias toward polar residues. Disordered regions lie at residues Gln-2274–Phe-2299, Ser-2319–Arg-2360, and Lys-2442–Asp-2469. 4 stretches are compositionally biased toward basic and acidic residues: residues Ser-2289–Phe-2299, His-2322–Thr-2336, Ser-2343–Ser-2359, and Lys-2442–Gln-2458. N-linked (GlcNAc...) asparagine glycosylation is found at Asn-2513 and Asn-2544. Residues Ile-2533–Ile-2587 are disordered. Residues Phe-2540–Thr-2557 are compositionally biased toward polar residues. Over residues Ser-2569 to Glu-2579 the composition is skewed to low complexity.

This sequence belongs to the SABRE family. As to expression, mostly expressed in pollen and roots, especially in tip-growing cells, but also present in seedlings, stems, leaves, buds, flowers, siliques and seeds.

Its subcellular location is the secreted. The protein resides in the golgi apparatus. Functionally, may be involved in membrane trafficking. Required for tip growth in pollen tubes and root hairs. The sequence is that of Protein KINKY POLLEN from Arabidopsis thaliana (Mouse-ear cress).